Reading from the N-terminus, the 367-residue chain is BTB/POZ domain-containing protein Tiwaz (367 aa).

Disordered regions lie at residues 16 to 46 and 62 to 87; these read LTVD…PRDL and SSPT…SSVT. A compositionally biased stretch (basic and acidic residues) spans 28-45; it reads CDMDRERERDVKALEPRD. The region spanning 135–205 is the BTB domain; it reads APVHIDVGGT…MRNSRLLIAE (71 aa). Residues 240-261 are disordered; the sequence is GNYLVAPPTPPARHIKTSPRTS.

Its function is as follows. Functions with the transcription factor TfAP-2 to regulate octopamine neuronal signaling pathways that control behaviors such as male aggression, male mating, and the initiation of feeding. Required for TfAP-2 transcriptional activity in octopaminergic neurons. Functions with TfAP-2 to regulate expression of genes which are involved in promoting octopamine production and secretion from octopaminergic neurons, such as Tbh and Vmat. Octopamine then modulates feeding and male aggression by regulating the expression of the satiation hormone Dsk in insulin-producing cells (IPCs). Functions with octopamine and Dsk as part of a negative feedback loop to prevent overeating; acts with TfAP-2 to regulate octopamine signaling pathways that initiate feeding, then octopamine activates expression of Dsk which inhibits consummatory behavior. May also be involved in negatively regulating nociception in larvae to prevent spontaneous pain and hyperalgesia. This Drosophila melanogaster (Fruit fly) protein is BTB/POZ domain-containing protein Tiwaz.